The sequence spans 319 residues: Zinc finger protein-like 1 homolog (319 aa).

Residues 1–43 (MGLCKCPKRKVTNLFCYEHRVNVCEFCLVDNHPNCVVQSYLNW) form a B box-type; degenerate zinc finger. Residues 53–101 (CSLCHTTLTQGETIRLNCLHLLHWRCFDDWAASFPPTTAPAGYRCPCCS) form an RING-type; atypical zinc finger. Residues 212-232 (ESSSDTRPLLRQDRDADNEEN) form a disordered region. The segment covering 219-232 (PLLRQDRDADNEEN) has biased composition (basic and acidic residues). The helical transmembrane segment at 264-284 (KMAIFVMFLALLALITIITVL) threads the bilayer.

It belongs to the ZFPL1 family.

It localises to the membrane. The polypeptide is Zinc finger protein-like 1 homolog (Caenorhabditis briggsae).